The chain runs to 217 residues: Small ribosomal subunit protein uS3 (217 aa).

The region spanning 38–106 (IRKFLKKRLS…KVTLDIQEVR (69 aa)) is the KH type-2 domain.

This sequence belongs to the universal ribosomal protein uS3 family. As to quaternary structure, part of the 30S ribosomal subunit. Forms a tight complex with proteins S10 and S14.

Functionally, binds the lower part of the 30S subunit head. Binds mRNA in the 70S ribosome, positioning it for translation. The protein is Small ribosomal subunit protein uS3 of Desulfotalea psychrophila (strain LSv54 / DSM 12343).